The following is a 204-amino-acid chain: Ras-related protein Rab-7L1 (204 aa).

6 residues coordinate GTP: Ser-33, Lys-34, His-35, Tyr-36, Lys-37, and Thr-39. Positions 36–44 match the Effector region motif; the sequence is YKSTVGVDF. Phosphothreonine; by LRRK2 is present on Thr-71. A Phosphoserine modification is found at Ser-72. Residues Lys-126, Val-156, and Lys-157 each contribute to the GTP site. 2 S-geranylgeranyl cysteine lipidation sites follow: Cys-203 and Cys-204.

It belongs to the small GTPase superfamily. Rab family. As to quaternary structure, interacts with LRRK2 (via the N-terminus); this interaction is direct and stimulates kinase activity.

The protein resides in the cell membrane. It is found in the cytoplasm. Its subcellular location is the perinuclear region. It localises to the golgi apparatus. The protein localises to the golgi apparatus membrane. The protein resides in the trans-Golgi network. It is found in the cytoskeleton. Its function is as follows. The small GTPases Rab are key regulators in vesicle trafficking. Essential for maintaining the integrity of endosome-trans-Golgi network structure. Together with LRRK2, plays a role in the retrograde trafficking pathway for recycling proteins, such as mannose 6 phosphate receptor (M6PR), between lysosomes and the Golgi apparatus in a retromer-dependent manner. Recruits LRRK2 to the Golgi apparatus and stimulates LRRK2 kinase activity. Stimulates phosphorylation of RAB10 'Thr-73' by LRRK2. Also regulates neuronal process morphology in the intact central nervous system (CNS). The protein is Ras-related protein Rab-7L1 (Rab29) of Mus musculus (Mouse).